We begin with the raw amino-acid sequence, 436 residues long: C4-dicarboxylate transport protein 2 (436 aa).

Helical transmembrane passes span 14-34 (VLVAIAIGIALGHWYPETAVA), 45-65 (LIKMAIAPIIFCTVVTGIAGM), 77-97 (MALLYFEVVSTVALIIGLVVV), 142-162 (VVGAFANGDILQVLFFSVLFG), 198-218 (PIGAFGAMAFTIGAYGVGSLV), 223-243 (LMLCFYITCILFVLIVLGGIA), 290-310 (VVGLVIPTGYSFNLDGTSIYL), 331-351 (ITLLLVLLIASKGAAGVTGSG), and 353-373 (IVLAATLSAVGHLPVAGLALI). The tract at residues 414–436 (ELAGEGNASSPASDIPVGGREAV) is disordered.

It belongs to the dicarboxylate/amino acid:cation symporter (DAACS) (TC 2.A.23) family.

It is found in the cell inner membrane. Functionally, responsible for the transport of dicarboxylates such as succinate, fumarate, and malate from the periplasm across the membrane. In Pseudomonas aeruginosa (strain UCBPP-PA14), this protein is C4-dicarboxylate transport protein 2.